We begin with the raw amino-acid sequence, 151 residues long: Large ribosomal subunit protein uL15 (151 aa).

The disordered stretch occupies residues 1–60; it reads MAENNPLKIHNLRPAPGAKTAKTRVGRGEASKGKTAGRGTKGTKARYQVPERFEGGQMPL.

Belongs to the universal ribosomal protein uL15 family. In terms of assembly, part of the 50S ribosomal subunit.

Binds to the 23S rRNA. The chain is Large ribosomal subunit protein uL15 from Streptomyces avermitilis (strain ATCC 31267 / DSM 46492 / JCM 5070 / NBRC 14893 / NCIMB 12804 / NRRL 8165 / MA-4680).